Here is a 300-residue protein sequence, read N- to C-terminus: Ribosomal protein L11 methyltransferase (300 aa).

S-adenosyl-L-methionine contacts are provided by Thr-148, Gly-171, Asp-193, and Asn-235.

It belongs to the methyltransferase superfamily. PrmA family.

The protein resides in the cytoplasm. It catalyses the reaction L-lysyl-[protein] + 3 S-adenosyl-L-methionine = N(6),N(6),N(6)-trimethyl-L-lysyl-[protein] + 3 S-adenosyl-L-homocysteine + 3 H(+). In terms of biological role, methylates ribosomal protein L11. The chain is Ribosomal protein L11 methyltransferase from Desulfotalea psychrophila (strain LSv54 / DSM 12343).